A 73-amino-acid polypeptide reads, in one-letter code: Protein SlyX homolog (73 aa).

Belongs to the SlyX family.

The protein is Protein SlyX homolog of Actinobacillus pleuropneumoniae serotype 5b (strain L20).